We begin with the raw amino-acid sequence, 483 residues long: Putative (R)-citramalate synthase CimA (483 aa).

The 245-residue stretch at 1 to 245 (MRDGEQTPGV…DTGIKHEQIY (245 aa)) folds into the Pyruvate carboxyltransferase domain.

The protein belongs to the alpha-IPM synthase/homocitrate synthase family. Homodimer.

The enzyme catalyses pyruvate + acetyl-CoA + H2O = (3R)-citramalate + CoA + H(+). Its pathway is amino-acid biosynthesis; L-isoleucine biosynthesis; 2-oxobutanoate from pyruvate: step 1/3. In terms of biological role, catalyzes the condensation of pyruvate and acetyl-coenzyme A to form (R)-citramalate. This chain is Putative (R)-citramalate synthase CimA, found in Methanosarcina acetivorans (strain ATCC 35395 / DSM 2834 / JCM 12185 / C2A).